A 106-amino-acid polypeptide reads, in one-letter code: Urease subunit beta (106 aa).

It belongs to the urease beta subunit family. Heterotrimer of UreA (gamma), UreB (beta) and UreC (alpha) subunits. Three heterotrimers associate to form the active enzyme.

The protein localises to the cytoplasm. It catalyses the reaction urea + 2 H2O + H(+) = hydrogencarbonate + 2 NH4(+). It functions in the pathway nitrogen metabolism; urea degradation; CO(2) and NH(3) from urea (urease route): step 1/1. The protein is Urease subunit beta of Klebsiella pneumoniae (strain 342).